Consider the following 366-residue polypeptide: Peptide chain release factor 2 (366 aa).

Gln251 is subject to N5-methylglutamine.

This sequence belongs to the prokaryotic/mitochondrial release factor family. In terms of processing, methylated by PrmC. Methylation increases the termination efficiency of RF2.

It localises to the cytoplasm. Functionally, peptide chain release factor 2 directs the termination of translation in response to the peptide chain termination codons UGA and UAA. In Exiguobacterium sp. (strain ATCC BAA-1283 / AT1b), this protein is Peptide chain release factor 2.